Here is a 502-residue protein sequence, read N- to C-terminus: Cobyric acid synthase (502 aa).

The GATase cobBQ-type domain maps to 260–433; it reads VLRVAVCAVP…WHGSLESDGF (174 aa). The active-site Nucleophile is Cys341. His425 is a catalytic residue.

This sequence belongs to the CobB/CobQ family. CobQ subfamily.

It functions in the pathway cofactor biosynthesis; adenosylcobalamin biosynthesis. In terms of biological role, catalyzes amidations at positions B, D, E, and G on adenosylcobyrinic A,C-diamide. NH(2) groups are provided by glutamine, and one molecule of ATP is hydrogenolyzed for each amidation. The polypeptide is Cobyric acid synthase (Streptomyces coelicolor (strain ATCC BAA-471 / A3(2) / M145)).